Here is a 218-residue protein sequence, read N- to C-terminus: Large ribosomal subunit protein uL3 (218 aa).

The interval G134 to Q154 is disordered. The residue at position 154 (Q154) is an N5-methylglutamine.

This sequence belongs to the universal ribosomal protein uL3 family. As to quaternary structure, part of the 50S ribosomal subunit. Forms a cluster with proteins L14 and L19. Methylated by PrmB.

One of the primary rRNA binding proteins, it binds directly near the 3'-end of the 23S rRNA, where it nucleates assembly of the 50S subunit. The protein is Large ribosomal subunit protein uL3 of Polynucleobacter necessarius subsp. necessarius (strain STIR1).